Here is a 190-residue protein sequence, read N- to C-terminus: Protein GrpE (190 aa).

The tract at residues 1–42 is disordered; the sequence is MNEKDNQTTSEPENEQEIIDVNDSGEQPEENETEQPQEEAVE. The span at 26 to 42 shows a compositional bias: acidic residues; it reads EQPEENETEQPQEEAVE.

Belongs to the GrpE family. In terms of assembly, homodimer.

Its subcellular location is the cytoplasm. Functionally, participates actively in the response to hyperosmotic and heat shock by preventing the aggregation of stress-denatured proteins, in association with DnaK and GrpE. It is the nucleotide exchange factor for DnaK and may function as a thermosensor. Unfolded proteins bind initially to DnaJ; upon interaction with the DnaJ-bound protein, DnaK hydrolyzes its bound ATP, resulting in the formation of a stable complex. GrpE releases ADP from DnaK; ATP binding to DnaK triggers the release of the substrate protein, thus completing the reaction cycle. Several rounds of ATP-dependent interactions between DnaJ, DnaK and GrpE are required for fully efficient folding. The polypeptide is Protein GrpE (Oceanobacillus iheyensis (strain DSM 14371 / CIP 107618 / JCM 11309 / KCTC 3954 / HTE831)).